The following is a 153-amino-acid chain: Nucleoside diphosphate kinase (153 aa).

ATP is bound by residues Lys13, Phe61, Arg89, Thr95, Arg106, and Asn116. Catalysis depends on His119, which acts as the Pros-phosphohistidine intermediate.

This sequence belongs to the NDK family. Homohexamer. The cofactor is Mg(2+).

Its subcellular location is the cytoplasm. The catalysed reaction is a 2'-deoxyribonucleoside 5'-diphosphate + ATP = a 2'-deoxyribonucleoside 5'-triphosphate + ADP. It carries out the reaction a ribonucleoside 5'-diphosphate + ATP = a ribonucleoside 5'-triphosphate + ADP. Its function is as follows. Major role in the synthesis of nucleoside triphosphates other than ATP. The ATP gamma phosphate is transferred to the NDP beta phosphate via a ping-pong mechanism, using a phosphorylated active-site intermediate. This is Nucleoside diphosphate kinase (NDK) from Brugia malayi (Filarial nematode worm).